Consider the following 111-residue polypeptide: Large ribosomal subunit protein P1 (111 aa).

Residues 84-111 (PAEAAAAEEKKEEEKEESDEDMGFGLFD) form a disordered region.

Belongs to the eukaryotic ribosomal protein P1/P2 family. In terms of assembly, P1 and P2 exist as dimers at the large ribosomal subunit. Phosphorylated.

Plays an important role in the elongation step of protein synthesis. This Aspergillus fumigatus (strain ATCC MYA-4609 / CBS 101355 / FGSC A1100 / Af293) (Neosartorya fumigata) protein is Large ribosomal subunit protein P1.